A 643-amino-acid chain; its full sequence is Translation factor GUF1, mitochondrial (643 aa).

The transit peptide at 1–18 (MLASQAIKRIFHRSWKPL) directs the protein to the mitochondrion. Residues 43 to 226 (ENYRNFSIVA…AIIDRIPPPT (184 aa)) enclose the tr-type G domain. GTP is bound by residues 52–59 (AHIDHGKS), 118–122 (DTPGH), and 172–175 (NKID).

Belongs to the TRAFAC class translation factor GTPase superfamily. Classic translation factor GTPase family. LepA subfamily.

The protein resides in the mitochondrion inner membrane. It catalyses the reaction GTP + H2O = GDP + phosphate + H(+). Functionally, promotes mitochondrial protein synthesis. May act as a fidelity factor of the translation reaction, by catalyzing a one-codon backward translocation of tRNAs on improperly translocated ribosomes. Binds to mitochondrial ribosomes in a GTP-dependent manner. The protein is Translation factor GUF1, mitochondrial of Zygosaccharomyces rouxii (strain ATCC 2623 / CBS 732 / NBRC 1130 / NCYC 568 / NRRL Y-229).